We begin with the raw amino-acid sequence, 196 residues long: Imidazoleglycerol-phosphate dehydratase (196 aa).

This sequence belongs to the imidazoleglycerol-phosphate dehydratase family.

The protein resides in the cytoplasm. The catalysed reaction is D-erythro-1-(imidazol-4-yl)glycerol 3-phosphate = 3-(imidazol-4-yl)-2-oxopropyl phosphate + H2O. It participates in amino-acid biosynthesis; L-histidine biosynthesis; L-histidine from 5-phospho-alpha-D-ribose 1-diphosphate: step 6/9. This Oleidesulfovibrio alaskensis (strain ATCC BAA-1058 / DSM 17464 / G20) (Desulfovibrio alaskensis) protein is Imidazoleglycerol-phosphate dehydratase.